The chain runs to 247 residues: ATP synthase subunit a, chloroplastic (247 aa).

A run of 5 helical transmembrane segments spans residues Gln-38–Val-58, Val-95–Leu-115, Ile-134–Ser-154, Leu-199–Leu-219, and Gly-220–Gly-240.

It belongs to the ATPase A chain family. As to quaternary structure, F-type ATPases have 2 components, CF(1) - the catalytic core - and CF(0) - the membrane proton channel. CF(1) has five subunits: alpha(3), beta(3), gamma(1), delta(1), epsilon(1). CF(0) has four main subunits: a, b, b' and c.

The protein localises to the plastid. Its subcellular location is the chloroplast thylakoid membrane. Functionally, key component of the proton channel; it plays a direct role in the translocation of protons across the membrane. This chain is ATP synthase subunit a, chloroplastic, found in Zea mays (Maize).